Here is a 548-residue protein sequence, read N- to C-terminus: MKKVTAMLFSMAVGLNAVSMAAKAKASEEQETDVLLIGGGIMSATLGTYLRELEPEWSMTMVERLEGVAQESSNGWNNAGTGHSALMELNYTPQNADGSISIEKAVAINEAFQISRQFWAHQVERGVLRTPRSFINTVPHMSFVWGEDNVNFLRARYAALQQSSLFRGMRYSEDHAQIKEWAPLVMEGRDPQQKVAATRTEIGTDVNYGEITRQLIASLQKKSNFSLQLSSEVRALKRNDDNTWTVTVADLKNGTAQNIRAKFVFIGAGGAALKLLQESGIPEAKDYAGFPVGGQFLVSENPDVVNHHLAKVYGKASVGAPPMSVPHIDTRVLDGKRVVLFGPFATFSTKFLKNGSLWDLMSSTTTSNVMPMMHVGLDNFDLVKYLVSQVMLSEEDRFEALKEYYPQAKKEDWRLWQAGQRVQIIKRDAEKGGVLRLGTEVVSDQQGTIAALLGASPGASTAAPIMLNLLEKVFGDRVSSPQWQATLKAIVPSYGRKLNGDVAATERELQYTSEVLGLNYDKPQAADSTPKPQLKPQPVQKEVADIAL.

The disordered stretch occupies residues 521-548; that stretch reads DKPQAADSTPKPQLKPQPVQKEVADIAL. Residues 530–541 show a composition bias toward low complexity; it reads PKPQLKPQPVQK.

The protein belongs to the MQO family. FAD is required as a cofactor.

It carries out the reaction (S)-malate + a quinone = a quinol + oxaloacetate. The protein operates within carbohydrate metabolism; tricarboxylic acid cycle; oxaloacetate from (S)-malate (quinone route): step 1/1. The chain is Malate:quinone oxidoreductase (mqo) from Escherichia coli (strain K12).